The sequence spans 195 residues: Translation initiation factor IF-3 (195 aa).

The segment at 158–195 (EQSEVQQRPKREGRNMIMFLSPRKTPLIKKEEDAKENN) is disordered. A compositionally biased stretch (basic and acidic residues) spans 185 to 195 (IKKEEDAKENN).

It belongs to the IF-3 family. In terms of assembly, monomer.

Its subcellular location is the cytoplasm. In terms of biological role, IF-3 binds to the 30S ribosomal subunit and shifts the equilibrium between 70S ribosomes and their 50S and 30S subunits in favor of the free subunits, thus enhancing the availability of 30S subunits on which protein synthesis initiation begins. The chain is Translation initiation factor IF-3 from Prochlorococcus marinus (strain MIT 9515).